Reading from the N-terminus, the 84-residue chain is Large ribosomal subunit protein bL27 (84 aa).

Residues 1–24 are disordered; that stretch reads MAHKKAGGSSRNGRDSKGQRLGCK.

It belongs to the bacterial ribosomal protein bL27 family.

This is Large ribosomal subunit protein bL27 from Pelobacter propionicus (strain DSM 2379 / NBRC 103807 / OttBd1).